A 357-amino-acid chain; its full sequence is S-adenosyl-L-methionine:benzoic acid/salicylic acid carboxyl methyltransferase 2 (357 aa).

Tyrosine 18 contacts S-adenosyl-L-homocysteine. Position 25 (glutamine 25) interacts with benzoate. S-adenosyl-L-homocysteine is bound by residues cysteine 59, asparagine 64, aspartate 96, leucine 97, serine 135, and phenylalanine 136. Tryptophan 157 serves as a coordination point for benzoate. Mg(2+) contacts are provided by asparagine 168, aspartate 254, phenylalanine 256, and asparagine 257. Glutamine 260 is a binding site for benzoate.

This sequence belongs to the methyltransferase superfamily. Type-7 methyltransferase family. As to expression, predominantly expressed in petal limbs and tubes of corollas.

It catalyses the reaction benzoate + S-adenosyl-L-methionine = methyl benzoate + S-adenosyl-L-homocysteine. The enzyme catalyses salicylate + S-adenosyl-L-methionine = methyl salicylate + S-adenosyl-L-homocysteine. Its pathway is aromatic compound metabolism. Functionally, converts benzoic acid into the volatile ester methyl benzoates. This scent, mostly produced in a rhythmical, diurnal manner, attracts the pollinators. The polypeptide is S-adenosyl-L-methionine:benzoic acid/salicylic acid carboxyl methyltransferase 2 (Petunia hybrida (Petunia)).